The primary structure comprises 27 residues: QKLCERPSGTWSGVCGNNNACKNQCIN.

A Pyrrolidone carboxylic acid modification is found at glutamine 1.

It belongs to the DEFL family. In terms of assembly, forms oligomers in its native state.

Possesses antifungal activity sensitive to inorganic cations. The polypeptide is Defensin-like protein 1 (Brassica campestris (Field mustard)).